A 333-amino-acid chain; its full sequence is D-threonate 4-phosphate dehydrogenase (333 aa).

Residues H140 and T141 each coordinate substrate. The a divalent metal cation site is built by H170, H214, and H270. 3 residues coordinate substrate: K278, N287, and R296.

The protein belongs to the PdxA family. PdxA2 subfamily. As to quaternary structure, homodimer. Requires a divalent metal cation as cofactor.

It catalyses the reaction 4-O-phospho-D-threonate + NAD(+) = dihydroxyacetone phosphate + CO2 + NADH. Functionally, catalyzes the NAD-dependent oxidation and subsequent decarboxylation of D-threonate 4-phosphate to produce dihydroxyacetone phosphate (DHAP). Can also use 4-hydroxy-L-threonine 4-phosphate as substrate. This is D-threonate 4-phosphate dehydrogenase from Cupriavidus necator (strain ATCC 17699 / DSM 428 / KCTC 22496 / NCIMB 10442 / H16 / Stanier 337) (Ralstonia eutropha).